Here is a 38-residue protein sequence, read N- to C-terminus: MTRPNPNDQNVELNRTSLYWGLLLIFVLAVPFSNYFFN.

Residues 17-37 form a helical membrane-spanning segment; it reads SLYWGLLLIFVLAVPFSNYFF.

It belongs to the PsbL family. PSII is composed of 1 copy each of membrane proteins PsbA, PsbB, PsbC, PsbD, PsbE, PsbF, PsbH, PsbI, PsbJ, PsbK, PsbL, PsbM, PsbT, PsbX, PsbY, PsbZ, Psb30/Ycf12, at least 3 peripheral proteins of the oxygen-evolving complex and a large number of cofactors. It forms dimeric complexes.

It is found in the plastid. The protein localises to the chloroplast thylakoid membrane. One of the components of the core complex of photosystem II (PSII). PSII is a light-driven water:plastoquinone oxidoreductase that uses light energy to abstract electrons from H(2)O, generating O(2) and a proton gradient subsequently used for ATP formation. It consists of a core antenna complex that captures photons, and an electron transfer chain that converts photonic excitation into a charge separation. This subunit is found at the monomer-monomer interface and is required for correct PSII assembly and/or dimerization. This Pinus thunbergii (Japanese black pine) protein is Photosystem II reaction center protein L.